Consider the following 270-residue polypeptide: Tryptophan synthase alpha chain (270 aa).

Active-site proton acceptor residues include Glu60 and Asp71.

This sequence belongs to the TrpA family. In terms of assembly, tetramer of two alpha and two beta chains.

It carries out the reaction (1S,2R)-1-C-(indol-3-yl)glycerol 3-phosphate + L-serine = D-glyceraldehyde 3-phosphate + L-tryptophan + H2O. The protein operates within amino-acid biosynthesis; L-tryptophan biosynthesis; L-tryptophan from chorismate: step 5/5. Its function is as follows. The alpha subunit is responsible for the aldol cleavage of indoleglycerol phosphate to indole and glyceraldehyde 3-phosphate. This chain is Tryptophan synthase alpha chain, found in Deinococcus radiodurans (strain ATCC 13939 / DSM 20539 / JCM 16871 / CCUG 27074 / LMG 4051 / NBRC 15346 / NCIMB 9279 / VKM B-1422 / R1).